The primary structure comprises 94 residues: Small ribosomal subunit protein bS18 (94 aa).

It belongs to the bacterial ribosomal protein bS18 family. As to quaternary structure, part of the 30S ribosomal subunit. Forms a tight heterodimer with protein bS6.

In terms of biological role, binds as a heterodimer with protein bS6 to the central domain of the 16S rRNA, where it helps stabilize the platform of the 30S subunit. The sequence is that of Small ribosomal subunit protein bS18 from Acetivibrio thermocellus (strain ATCC 27405 / DSM 1237 / JCM 9322 / NBRC 103400 / NCIMB 10682 / NRRL B-4536 / VPI 7372) (Clostridium thermocellum).